A 114-amino-acid chain; its full sequence is T cell receptor alpha variable 12-3 (114 aa).

The signal sequence occupies residues 1–21; the sequence is MMKSLRVLLVILWLQLSWVWS. Residues 24–114 enclose the Ig-like domain; sequence KEVEQDPGPL…DSATYLCAMS (91 aa). Asn-44 is a glycosylation site (N-linked (GlcNAc...) asparagine). An intrachain disulfide couples Cys-45 to Cys-111.

Alpha-beta TR is a heterodimer composed of an alpha and beta chain; disulfide-linked. The alpha-beta TR is associated with the transmembrane signaling CD3 coreceptor proteins to form the TR-CD3 (TcR or TCR). The assembly of alpha-beta TR heterodimers with CD3 occurs in the endoplasmic reticulum where a single alpha-beta TR heterodimer associates with one CD3D-CD3E heterodimer, one CD3G-CD3E heterodimer and one CD247 homodimer forming a stable octameric structure. CD3D-CD3E and CD3G-CD3E heterodimers preferentially associate with TR alpha and TR beta chains, respectively. The association of the CD247 homodimer is the last step of TcR assembly in the endoplasmic reticulum and is required for transport to the cell surface.

It localises to the cell membrane. V region of the variable domain of T cell receptor (TR) alpha chain that participates in the antigen recognition. Alpha-beta T cell receptors are antigen specific receptors which are essential to the immune response and are present on the cell surface of T lymphocytes. Recognize peptide-major histocompatibility (MH) (pMH) complexes that are displayed by antigen presenting cells (APC), a prerequisite for efficient T cell adaptive immunity against pathogens. Binding of alpha-beta TR to pMH complex initiates TR-CD3 clustering on the cell surface and intracellular activation of LCK that phosphorylates the ITAM motifs of CD3G, CD3D, CD3E and CD247 enabling the recruitment of ZAP70. In turn ZAP70 phosphorylates LAT, which recruits numerous signaling molecules to form the LAT signalosome. The LAT signalosome propagates signal branching to three major signaling pathways, the calcium, the mitogen-activated protein kinase (MAPK) kinase and the nuclear factor NF-kappa-B (NF-kB) pathways, leading to the mobilization of transcription factors that are critical for gene expression and essential for T cell growth and differentiation. The T cell repertoire is generated in the thymus, by V-(D)-J rearrangement. This repertoire is then shaped by intrathymic selection events to generate a peripheral T cell pool of self-MH restricted, non-autoaggressive T cells. Post-thymic interaction of alpha-beta TR with the pMH complexes shapes TR structural and functional avidity. The chain is T cell receptor alpha variable 12-3 from Homo sapiens (Human).